The following is a 397-amino-acid chain: Putative galactokinase (397 aa).

Ser78 is an ATP binding site. Catalysis depends on Asp182, which acts as the Proton acceptor.

The protein belongs to the GHMP kinase family. GalK subfamily.

Its subcellular location is the cytoplasm. The enzyme catalyses alpha-D-galactose + ATP = alpha-D-galactose 1-phosphate + ADP + H(+). Its pathway is carbohydrate metabolism; galactose metabolism. Functionally, catalyzes the transfer of the gamma-phosphate of ATP to D-galactose to form alpha-D-galactose-1-phosphate (Gal-1-P). This is Putative galactokinase (galK) from Treponema pallidum (strain Nichols).